Here is a 184-residue protein sequence, read N- to C-terminus: Large ribosomal subunit protein uL6 (184 aa).

This sequence belongs to the universal ribosomal protein uL6 family. In terms of assembly, part of the 50S ribosomal subunit.

In terms of biological role, this protein binds to the 23S rRNA, and is important in its secondary structure. It is located near the subunit interface in the base of the L7/L12 stalk, and near the tRNA binding site of the peptidyltransferase center. This Thermococcus kodakarensis (strain ATCC BAA-918 / JCM 12380 / KOD1) (Pyrococcus kodakaraensis (strain KOD1)) protein is Large ribosomal subunit protein uL6.